Here is a 73-residue protein sequence, read N- to C-terminus: Homeodomain-only protein (73 aa).

Residues 3–62 constitute a DNA-binding region (homeobox; degenerate); the sequence is AEPANGPTEDQVEILEYNFNKVNRHPDPTTLCLIAAEAGLSEEETQKWFKQRLAQWRRSE.

In terms of assembly, interacts with serum response factor (SRF). Component of a large complex containing histone deacetylases such as HDAC2. Interacts with the acetylated forms of HSPA1A and HSPA1B. Interacts with HSPA8.

The protein resides in the nucleus. The protein localises to the cytoplasm. Atypical homeodomain protein which does not bind DNA and is required to modulate cardiac growth and development. Acts via its interaction with SRF, thereby modulating the expression of SRF-dependent cardiac-specific genes and cardiac development. Prevents SRF-dependent transcription either by inhibiting SRF binding to DNA or by recruiting histone deacetylase (HDAC) proteins that prevent transcription by SRF. Overexpression causes cardiac hypertrophy. Acts as a co-chaperone for HSPA1A and HSPA1B chaperone proteins and assists in chaperone-mediated protein refolding. The sequence is that of Homeodomain-only protein (HOPX) from Sus scrofa (Pig).